The primary structure comprises 205 residues: High frequency lysogenization protein HflD homolog (205 aa).

The protein belongs to the HflD family.

Its subcellular location is the cytoplasm. The protein localises to the cell inner membrane. This is High frequency lysogenization protein HflD homolog from Vibrio parahaemolyticus serotype O3:K6 (strain RIMD 2210633).